Here is a 284-residue protein sequence, read N- to C-terminus: Ermin (284 aa).

Residues 1 to 61 (MTDVPATFTQ…APTKGSQEER (61 aa)) are disordered. Residue S73 is modified to Phosphoserine. Positions 108–251 (TFREGRQWEK…PTLGKKSDIS (144 aa)) are disordered. Composition is skewed to basic and acidic residues over residues 126–140 (EIRR…QPLK) and 171–183 (LHSK…KVWD). A compositionally biased stretch (acidic residues) spans 184 to 200 (EEIDDDDDDNCNDDEDE). The segment covering 201 to 220 (VRVIEFKKKHEEVSQFKEEG) has biased composition (basic and acidic residues). Residues S214, S226, S230, and S233 each carry the phosphoserine modification. The span at 225–235 (DSPLSSASSQA) shows a compositional bias: low complexity. Position 237 is a phosphothreonine (T237). Residues 265 to 284 (KIRKGNTKQRIDEFESMMHL) form a binds actin region.

In terms of assembly, binds actin.

It is found in the cytoplasm. Its subcellular location is the cytoskeleton. Its function is as follows. Plays a role in cytoskeletal rearrangements during the late wrapping and/or compaction phases of myelinogenesis as well as in maintenance and stability of myelin sheath in the adult. May play an important role in late-stage oligodendroglia maturation, myelin/Ranvier node formation during CNS development, and in the maintenance and plasticity of related structures in the mature CNS. The sequence is that of Ermin (ERMN) from Pongo abelii (Sumatran orangutan).